The following is a 581-amino-acid chain: Sabinene synthase 1, chloroplastic (581 aa).

A chloroplast-targeting transit peptide spans methionine 1–leucine 28. Residues arginine 297, aspartate 334, aspartate 338, arginine 475, and aspartate 478 each contribute to the (2E)-geranyl diphosphate site. 2 residues coordinate Mg(2+): aspartate 334 and aspartate 338. Residues aspartate 334–aspartate 338 carry the DDXXD motif motif. Residues aspartate 478, threonine 482, and glutamate 486 each contribute to the Mg(2+) site.

The protein belongs to the terpene synthase family. Tpsb subfamily. The cofactor is Mg(2+). Mn(2+) serves as cofactor.

The protein localises to the plastid. The protein resides in the chloroplast. It carries out the reaction (2E)-geranyl diphosphate = sabinene + diphosphate. The catalysed reaction is (2E)-geranyl diphosphate = beta-myrcene + diphosphate. It functions in the pathway secondary metabolite biosynthesis; terpenoid biosynthesis. Its function is as follows. Monoterpene synthase (TPS) involved in the biosynthesis of monoterpene natural products, components of the chemical defense arsenal. Catalyzes the conversion of (2E)-geranyl diphosphate (GPP) into sabinene, and, as minor products, myrcene. The polypeptide is Sabinene synthase 1, chloroplastic (Salvia pomifera (Apple sage)).